Here is a 245-residue protein sequence, read N- to C-terminus: DNA polymerase sliding clamp (245 aa).

Belongs to the PCNA family. As to quaternary structure, homotrimer. The subunits circularize to form a toroid; DNA passes through its center. Replication factor C (RFC) is required to load the toroid on the DNA.

Sliding clamp subunit that acts as a moving platform for DNA processing. Responsible for tethering the catalytic subunit of DNA polymerase and other proteins to DNA during high-speed replication. This is DNA polymerase sliding clamp from Archaeoglobus fulgidus (strain ATCC 49558 / DSM 4304 / JCM 9628 / NBRC 100126 / VC-16).